The following is a 543-amino-acid chain: Carboxypeptidase Y homolog A (543 aa).

Positions 1-17 are cleaved as a signal peptide; sequence MRVLPATLLVGAATAAA. The propeptide occupies 18 to 124; it reads PPFQQILGLP…KLEAYDLRVK (107 aa). 5 disulfide bridges follow: Cys179–Cys419, Cys313–Cys327, Cys337–Cys360, Cys344–Cys353, and Cys382–Cys389. Asn210 carries an N-linked (GlcNAc...) asparagine glycan. Ser266 is an active-site residue. Asp458 is a catalytic residue. A glycan (N-linked (GlcNAc...) asparagine) is linked at Asn509. His520 is an active-site residue.

It belongs to the peptidase S10 family.

The protein localises to the vacuole. It carries out the reaction Release of a C-terminal amino acid with broad specificity.. Vacuolar carboxypeptidase involved in degradation of small peptides. Digests preferentially peptides containing an aliphatic or hydrophobic residue in P1' position, as well as methionine, leucine or phenylalanine in P1 position of ester substrate. This chain is Carboxypeptidase Y homolog A (cpyA), found in Neosartorya fischeri (strain ATCC 1020 / DSM 3700 / CBS 544.65 / FGSC A1164 / JCM 1740 / NRRL 181 / WB 181) (Aspergillus fischerianus).